Here is a 52-residue protein sequence, read N- to C-terminus: Phospholamban (52 aa).

Residue methionine 1 is modified to N-acetylmethionine. Topologically, residues 1-31 are cytoplasmic; sequence MEKVQYLTRSAIRRASTIEMPQQARQNLQNL. Phosphoserine; by PKA is present on serine 16. Position 17 is a phosphothreonine; by CaMK2 (threonine 17). Residues 32 to 52 form a helical membrane-spanning segment; sequence FINFCLILICLLLICIIVMLL. Cysteine 36 carries S-palmitoyl cysteine lipidation.

Belongs to the phospholamban family. Homopentamer. Can also form heterooligomers with other sarcoplasmic/endoplasmic reticulum calcium ATPase (SERCA) regulators ARLN, ERLN, SLN and STRIT1/DWORF. Monomer. Interacts with HAX1. Interacts as a monomer with ATP2A2; the interaction decreases ATP2A2 Ca(2+) affinity. Interacts with VMP1; VMP1 competes with PLN and SLN to prevent them from forming an inhibitory complex with ATP2A2. Interacts with S100A1 in a Ca(2+)-dependent manner. In terms of processing, phosphorylated at Thr-17 by CaMK2, and in response to beta-adrenergic stimulation. Phosphorylation by DMPK may stimulate sarcoplasmic reticulum calcium uptake in cardiomyocytes. Phosphorylation by PKA abolishes the inhibition of ATP2A2-mediated calcium uptake. Post-translationally, palmitoylated by ZDHHC16, promoting formation of the homopentamer. In elongated spermatids, proteolytically cleaved by SPPL2C which modulates intracellular Ca(2+) homeostasis. As to expression, expressed in testis (at protein level). In brain, expressed specifically in GABAergic GAD67+ neurons of the thalamic reticular nucleus where it colocalizes with ATP2A2/SERCA2 (at protein level). Expressed in the bladder and in the atria and ventricles of the heart.

The protein localises to the endoplasmic reticulum membrane. It is found in the sarcoplasmic reticulum membrane. It localises to the mitochondrion membrane. Its subcellular location is the membrane. Its function is as follows. Reversibly inhibits the activity of ATP2A2/SERCA2 in cardiac sarcoplasmic reticulum by decreasing the apparent affinity of the ATPase for Ca(2+). Binds preferentially to the ATP-bound E1 conformational form of ATP2A2 which predominates at low Ca(2+) concentrations during the diastolic phase of the cardiac cycle. Inhibits ATP2A2 Ca(2+) affinity by disrupting its allosteric activation by ATP. Modulates the contractility of the heart muscle in response to physiological stimuli via its effects on ATP2A2. Modulates calcium re-uptake during muscle relaxation and plays an important role in calcium homeostasis in the heart muscle. The degree of ATP2A2 inhibition depends on the oligomeric state of PLN. ATP2A2 inhibition is alleviated by PLN phosphorylation. Also inhibits the activity of ATP2A3/SERCA3. Controls intracellular Ca(2+) levels in elongated spermatids and may play a role in germ cell differentiation. In the thalamic reticular nucleus of the brain, plays a role in the regulation of sleep patterns and executive functioning. This Mus musculus (Mouse) protein is Phospholamban.